We begin with the raw amino-acid sequence, 188 residues long: Pyridoxal 5'-phosphate synthase subunit PdxT (188 aa).

L-glutamine is bound at residue 47 to 49 (GES). Catalysis depends on Cys79, which acts as the Nucleophile. Residues Arg106 and 134–135 (IR) each bind L-glutamine. Active-site charge relay system residues include His169 and Glu171.

The protein belongs to the glutaminase PdxT/SNO family. In terms of assembly, in the presence of PdxS, forms a dodecamer of heterodimers. Only shows activity in the heterodimer.

The enzyme catalyses aldehydo-D-ribose 5-phosphate + D-glyceraldehyde 3-phosphate + L-glutamine = pyridoxal 5'-phosphate + L-glutamate + phosphate + 3 H2O + H(+). It carries out the reaction L-glutamine + H2O = L-glutamate + NH4(+). The protein operates within cofactor biosynthesis; pyridoxal 5'-phosphate biosynthesis. Functionally, catalyzes the hydrolysis of glutamine to glutamate and ammonia as part of the biosynthesis of pyridoxal 5'-phosphate. The resulting ammonia molecule is channeled to the active site of PdxS. This is Pyridoxal 5'-phosphate synthase subunit PdxT from Caldicellulosiruptor bescii (strain ATCC BAA-1888 / DSM 6725 / KCTC 15123 / Z-1320) (Anaerocellum thermophilum).